The primary structure comprises 550 residues: MNWILCLSLTLLLVVQTAWGALHTKEPLADTKYGTLRGKQIHVGKTPINVFLGVPFSKPPVGAHRFAAPEPPEPWEGIRDATTYAPVCLQESWGQVTSMYFNTHKRYKWLHFSEDCLYLNVHAPVRARGDPLQPVMIWFPGGAFLVGSASTYDGSELAAREKVVVVVLQHRLGILGFLSTGDSQARGNWALLDQIAALRWVQKNIEAFGGDPGCVTLFGQSSGAMCISGLMTSSLARGLFHRAISQSGTAVFQNFITPDPLKVAKKIAQLAGCNHNSTKILVDCLRTLSGAEVMRVSQKMRFFKLHSQEDPQKVVWFMSPVVDGVVFQDNPIVLLTQGQVAPVPYLLGVNNLEFNWLLPFIMKFPMSHLRKETIAKLLWSTSTLLNVTKEQLPLVMEEYLRDVDDHDQKMLQKHVMDLAADATFVYSTLQAAHYHHNAGFPVYLYEFEHYAPGTIVKPRTDGADHGDEIGFIFGSPFSKGHSSNKEKALSLQMMKYWANFARTGNPNGGKLPYWPRYNKDEKYLQLDLTTRVGVMLREEKMAFWKRLHQN.

The N-terminal stretch at 1 to 20 (MNWILCLSLTLLLVVQTAWG) is a signal peptide. The cysteines at positions 88 and 116 are disulfide-linked. Catalysis depends on serine 221, which acts as the Acyl-ester intermediate. A disulfide bridge connects residues cysteine 273 and cysteine 284. Asparagine 276 is a glycosylation site (N-linked (GlcNAc...) asparagine). Glutamate 353 functions as the Charge relay system in the catalytic mechanism. Asparagine 386 is a glycosylation site (N-linked (GlcNAc...) asparagine). The Charge relay system role is filled by histidine 465.

This sequence belongs to the type-B carboxylesterase/lipase family.

It is found in the secreted. Its function is as follows. Probable carboxylesterase. This Bos taurus (Bovine) protein is Carboxylesterase 4A (CES4A).